Here is a 402-residue protein sequence, read N- to C-terminus: Imidazolonepropionase (402 aa).

His-66 and His-68 together coordinate Fe(3+). Positions 66 and 68 each coordinate Zn(2+). 4-imidazolone-5-propanoate-binding residues include Arg-75, Tyr-138, and His-171. Tyr-138 serves as a coordination point for N-formimidoyl-L-glutamate. His-236 provides a ligand contact to Fe(3+). His-236 lines the Zn(2+) pocket. Residue Gln-239 coordinates 4-imidazolone-5-propanoate. Asp-311 contributes to the Fe(3+) binding site. Asp-311 provides a ligand contact to Zn(2+). N-formimidoyl-L-glutamate contacts are provided by Asn-313 and Gly-315. Thr-316 contacts 4-imidazolone-5-propanoate.

It belongs to the metallo-dependent hydrolases superfamily. HutI family. Requires Zn(2+) as cofactor. The cofactor is Fe(3+).

It localises to the cytoplasm. It catalyses the reaction 4-imidazolone-5-propanoate + H2O = N-formimidoyl-L-glutamate. It participates in amino-acid degradation; L-histidine degradation into L-glutamate; N-formimidoyl-L-glutamate from L-histidine: step 3/3. Catalyzes the hydrolytic cleavage of the carbon-nitrogen bond in imidazolone-5-propanoate to yield N-formimidoyl-L-glutamate. It is the third step in the universal histidine degradation pathway. This Vibrio cholerae serotype O1 (strain ATCC 39541 / Classical Ogawa 395 / O395) protein is Imidazolonepropionase.